The sequence spans 328 residues: Ferredoxin--NADP reductase 1 (328 aa).

Residues Glu37, Lys45, Tyr49, Val89, and Thr310 each coordinate FAD.

It belongs to the ferredoxin--NADP reductase type 2 family. In terms of assembly, homodimer. It depends on FAD as a cofactor.

It catalyses the reaction 2 reduced [2Fe-2S]-[ferredoxin] + NADP(+) + H(+) = 2 oxidized [2Fe-2S]-[ferredoxin] + NADPH. This Latilactobacillus sakei subsp. sakei (strain 23K) (Lactobacillus sakei subsp. sakei) protein is Ferredoxin--NADP reductase 1.